We begin with the raw amino-acid sequence, 901 residues long: Alanine--tRNA ligase (901 aa).

Histidine 581, histidine 585, cysteine 684, and histidine 688 together coordinate Zn(2+).

This sequence belongs to the class-II aminoacyl-tRNA synthetase family. Zn(2+) is required as a cofactor.

It is found in the cytoplasm. It catalyses the reaction tRNA(Ala) + L-alanine + ATP = L-alanyl-tRNA(Ala) + AMP + diphosphate. Its function is as follows. Catalyzes the attachment of alanine to tRNA(Ala) in a two-step reaction: alanine is first activated by ATP to form Ala-AMP and then transferred to the acceptor end of tRNA(Ala). Also edits incorrectly charged Ser-tRNA(Ala) and Gly-tRNA(Ala) via its editing domain. In Mycobacterium ulcerans (strain Agy99), this protein is Alanine--tRNA ligase.